Reading from the N-terminus, the 864-residue chain is DNA mismatch repair protein MutS (864 aa).

An ATP-binding site is contributed by 621 to 628 (GPNMGGKS). The segment at 804 to 833 (ETGKPESPAPVASRSSKPSMQADMFAEPQP) is disordered.

It belongs to the DNA mismatch repair MutS family.

Functionally, this protein is involved in the repair of mismatches in DNA. It is possible that it carries out the mismatch recognition step. This protein has a weak ATPase activity. The polypeptide is DNA mismatch repair protein MutS (Teredinibacter turnerae (strain ATCC 39867 / T7901)).